The sequence spans 286 residues: Diaminopimelate epimerase (286 aa).

Substrate-binding residues include Asn13 and Asn66. Cys75 acts as the Proton donor in catalysis. Substrate-binding positions include 76-77, Asn165, Asn198, and 216-217; these read GN and ER. The Proton acceptor role is filled by Cys225. A substrate-binding site is contributed by 226–227; sequence GT.

Belongs to the diaminopimelate epimerase family. In terms of assembly, homodimer.

It is found in the cytoplasm. It carries out the reaction (2S,6S)-2,6-diaminopimelate = meso-2,6-diaminopimelate. Its pathway is amino-acid biosynthesis; L-lysine biosynthesis via DAP pathway; DL-2,6-diaminopimelate from LL-2,6-diaminopimelate: step 1/1. Catalyzes the stereoinversion of LL-2,6-diaminopimelate (L,L-DAP) to meso-diaminopimelate (meso-DAP), a precursor of L-lysine and an essential component of the bacterial peptidoglycan. This is Diaminopimelate epimerase from Thermosynechococcus vestitus (strain NIES-2133 / IAM M-273 / BP-1).